A 190-amino-acid chain; its full sequence is Peptidyl-tRNA hydrolase (190 aa).

TRNA is bound at residue Phe-14. His-19 acts as the Proton acceptor in catalysis. Residues Met-64, Asn-66, and Asn-112 each contribute to the tRNA site.

This sequence belongs to the PTH family. Monomer.

The protein resides in the cytoplasm. It catalyses the reaction an N-acyl-L-alpha-aminoacyl-tRNA + H2O = an N-acyl-L-amino acid + a tRNA + H(+). In terms of biological role, hydrolyzes ribosome-free peptidyl-tRNAs (with 1 or more amino acids incorporated), which drop off the ribosome during protein synthesis, or as a result of ribosome stalling. Catalyzes the release of premature peptidyl moieties from peptidyl-tRNA molecules trapped in stalled 50S ribosomal subunits, and thus maintains levels of free tRNAs and 50S ribosomes. This Staphylococcus aureus (strain Mu3 / ATCC 700698) protein is Peptidyl-tRNA hydrolase.